The primary structure comprises 311 residues: MALGGVGRGGAARAAWPRLLLAALAPALALAGPALPEVLFRCPPCTAERLAACSPAARPPCPELVREPGCGCCPVCARLEDEACGVYTPRCAAGLRCYPDPGAELPPQALVQGQGTCARPPDTDEYGASTEPPADNGDDRSESILAENHVDSTGGMMSGASSRKPLKTGMKEMPVMREKVNEQQRQMGKVGKAHHNHEDSKKSRMPTGRTPCQQELDQVLERISTMRLPDERGPLEHLYSLHIPNCDKHGLYNLKQCKMSVNGQRGECWCVDPIHGKVIQGAPTIRGDPECHLFYTAHEQEDRGAHALRSQ.

The signal sequence occupies residues methionine 1–proline 36. The IGFBP N-terminal domain maps to valine 38 to proline 120. Intrachain disulfides connect cysteine 42–cysteine 70, cysteine 45–cysteine 72, cysteine 53–cysteine 73, cysteine 61–cysteine 76, cysteine 84–cysteine 97, and cysteine 91–cysteine 117. 2 disordered regions span residues glutamine 112–threonine 168 and glycine 188–threonine 210. The 83-residue stretch at arginine 209–cysteine 291 folds into the Thyroglobulin type-1 domain. Disulfide bonds link cysteine 212/cysteine 246, cysteine 257/cysteine 268, and cysteine 270/cysteine 291. The short motif at arginine 286–aspartate 288 is the Cell attachment site element.

In terms of assembly, binds IGF2 more than IGF1.

It localises to the secreted. Inhibits IGF-mediated growth and developmental rates. IGF-binding proteins prolong the half-life of the IGFs and have been shown to either inhibit or stimulate the growth promoting effects of the IGFs on cell culture. They alter the interaction of IGFs with their cell surface receptors. In Gallus gallus (Chicken), this protein is Insulin-like growth factor-binding protein 2 (IGFBP2).